A 558-amino-acid polypeptide reads, in one-letter code: Suppressor of zyg-1 protein 20 (558 aa).

Residues 45-146 (KVKAEESSGV…ARNRILGTEY (102 aa)) form the SUZ domain. Disordered stretches follow at residues 50–132 (ESSG…ERQA), 205–241 (FTQPPPSVSESGGVYNGPPGFQQKQPNFQPTLQQQSL), and 374–558 (QRNQ…NRPQ). Basic and acidic residues predominate over residues 69–81 (EEPKRVFLRRPKD). A compositionally biased stretch (polar residues) spans 94–109 (PPTSADTEEQPVTNVR). Basic and acidic residues predominate over residues 117–131 (NQKEKQPAPTYEERQ). Low complexity-rich tracts occupy residues 374-394 (QRNQVNSYPQQNGAGRGQNRQ) and 424-477 (NNGQ…QQQQ). Polar residues-rich tracts occupy residues 478-508 (NKSGKFGQNRNDMQKNNYQPNLQQPPMSQNP) and 545-558 (SASQWPALQQNRPQ).

Interacts (via C-terminus) with atx-2 (via C-terminus); the interaction is RNA independent. Interacts with let-92. In terms of processing, phosphorylated. May be dephosphorylated by let-92.

It localises to the cytoplasm. It is found in the cytoskeleton. Its subcellular location is the microtubule organizing center. The protein resides in the centrosome. The protein localises to the centriole. It localises to the nucleus. It is found in the nucleolus. Its subcellular location is the chromosome. RNA binding protein that is required for normal cell division and cytokinesis during embryonic development. Functions with RNA-binding protein atx-2 to ensure embryonic cell division, and to this end, plays a role in the regulation of centrosome assembly, position and size, and in astral microtubule outgrowth and nucleation. Furthermore, negatively regulates the levels of the protein kinase zyg-1 at the centrosome. Also involved in ensuring centrosome attachment to the nuclear envelope. The sequence is that of Suppressor of zyg-1 protein 20 from Caenorhabditis elegans.